The primary structure comprises 610 residues: Preterminal protein (610 aa).

Positions 288–379 (TLRSGTQTGL…ESFSDDVGLS (92 aa)) are disordered. The Nuclear localization signal motif lies at 328-337 (SLPIRRRRRR). A compositionally biased stretch (basic residues) spans 331–340 (IRRRRRRGTR). Residues 341 to 350 (RQVEREDSVR) show a composition bias toward basic and acidic residues. S549 carries the O-(5'-phospho-DNA)-serine modification.

It belongs to the adenoviridae terminal protein family. In terms of assembly, heterodimer with the polymerase; this heterodimer binds to bp 9 to 18 of the genome. Interacts with host POU2F1; POU2F1 binds to the auxiliary sequences in the inverted terminal repeats and tethers the pTP-POL heterodimer to the origin DNA thereby participating in the assembly of the pre-initiation complex (POL-TP-DBP-NFIA-POU2F1). Post-translationally, preterminal protein is used to replicate viral genome, upon genomic encapsidation it is processed first into iTP and finally into TP by adenovirus protease.

The protein localises to the host nucleus matrix. Its function is as follows. Protein covalently bound to the viral DNA that acts as a primer for viral genomic replication by DNA strand displacement. Assembles on the viral origin of replication in an initiation complex with viral polymerase, DBP, host NFIA and host POU2F1/OCT1. During initiation, the polymerase covalently couples the first dCTP with Ser-580 of pTP. The terminal protein stimulates the template activity over 20 fold compared to protein-free templates. Neo-synthesized viral genomes are linked to two preterminal proteins, one for each 5' end. These new genomes are encapsidated in the nucleus, and during capsid maturation by viral protease, preterminal protein is first cleaved into intermediary (iTP), then into mature TP. May play a role in host nuclear matrix localization of genomic DNA. The protein is Preterminal protein of Snake adenovirus serotype 1 (SnAdV-1).